A 144-amino-acid chain; its full sequence is Bacilliredoxin BCE_2233 (144 aa).

It belongs to the bacilliredoxin family.

The polypeptide is Bacilliredoxin BCE_2233 (Bacillus cereus (strain ATCC 10987 / NRS 248)).